Reading from the N-terminus, the 266-residue chain is Uridylate kinase (266 aa).

Residue 26-29 (KLGG) participates in ATP binding. Gly67 is a binding site for UMP. The ATP site is built by Gly68 and Arg72. UMP-binding positions include Asp87 and 148 to 155 (LGAPYFST). ATP-binding residues include Tyr181 and Asp184.

Belongs to the UMP kinase family. In terms of assembly, homohexamer.

The protein resides in the cytoplasm. The enzyme catalyses UMP + ATP = UDP + ADP. Its pathway is pyrimidine metabolism; CTP biosynthesis via de novo pathway; UDP from UMP (UMPK route): step 1/1. With respect to regulation, inhibited by UTP. In terms of biological role, catalyzes the reversible phosphorylation of UMP to UDP. The protein is Uridylate kinase of Acidothermus cellulolyticus (strain ATCC 43068 / DSM 8971 / 11B).